A 294-amino-acid chain; its full sequence is tRNA pseudouridine synthase B (294 aa).

Catalysis depends on Asp39, which acts as the Nucleophile.

Belongs to the pseudouridine synthase TruB family. Type 1 subfamily.

It catalyses the reaction uridine(55) in tRNA = pseudouridine(55) in tRNA. Responsible for synthesis of pseudouridine from uracil-55 in the psi GC loop of transfer RNAs. In Streptococcus pyogenes serotype M5 (strain Manfredo), this protein is tRNA pseudouridine synthase B.